We begin with the raw amino-acid sequence, 261 residues long: Putative [LysW]-aminoadipate/[LysW]-glutamate kinase (261 aa).

Residues 35–36 (GG), R62, and N162 each bind substrate.

This sequence belongs to the acetylglutamate kinase family. LysZ subfamily.

The protein resides in the cytoplasm. The catalysed reaction is [amino-group carrier protein]-C-terminal-N-(1,4-dicarboxybutan-1-yl)-L-glutamine + ATP = [amino-group carrier protein]-C-terminal-N-(1-carboxy-5-phosphooxy-5-oxopentan-1-yl)-L-glutamine + ADP. It carries out the reaction [amino-group carrier protein]-C-terminal-gamma-(L-glutamyl)-L-glutamate + ATP = [amino-group carrier protein]-C-terminal-gamma-(5-phospho-L-glutamyl)-L-glutamate + ADP. It functions in the pathway amino-acid biosynthesis; L-lysine biosynthesis via AAA pathway; L-lysine from L-alpha-aminoadipate (Thermus route): step 2/5. Its pathway is amino-acid biosynthesis; L-arginine biosynthesis. Involved in both the arginine and lysine biosynthetic pathways. Phosphorylates the LysW-bound precursors glutamate (for arginine biosynthesis), respectively alpha-aminoadipate (for lysine biosynthesis). This is Putative [LysW]-aminoadipate/[LysW]-glutamate kinase from Pyrobaculum aerophilum (strain ATCC 51768 / DSM 7523 / JCM 9630 / CIP 104966 / NBRC 100827 / IM2).